Consider the following 407-residue polypeptide: tRNA N6-adenosine threonylcarbamoyltransferase, mitochondrial (407 aa).

Residues 1–30 (MISIKGTGRFLLDNYRIWQRRAFNRPIQLR) constitute a mitochondrion transit peptide. Positions 145 and 149 each coordinate a divalent metal cation. Substrate contacts are provided by residues 170 to 174 (LVSGG), aspartate 203, alanine 217, glutamate 221, 328 to 329 (SN), and serine 360. Residue aspartate 361 participates in a divalent metal cation binding.

This sequence belongs to the KAE1 / TsaD family. Homodimer. A divalent metal cation serves as cofactor.

The protein localises to the mitochondrion. The enzyme catalyses L-threonylcarbamoyladenylate + adenosine(37) in tRNA = N(6)-L-threonylcarbamoyladenosine(37) in tRNA + AMP + H(+). Required for the formation of a threonylcarbamoyl group on adenosine at position 37 (t(6)A37) in mitochondrial tRNAs that read codons beginning with adenine. Probably involved in the transfer of the threonylcarbamoyl moiety of threonylcarbamoyl-AMP (TC-AMP) to the N6 group of A37. Involved in mitochondrial genome maintenance. This chain is tRNA N6-adenosine threonylcarbamoyltransferase, mitochondrial (QRI7), found in Saccharomyces cerevisiae (strain ATCC 204508 / S288c) (Baker's yeast).